The chain runs to 291 residues: ATP synthase gamma chain (291 aa).

The protein belongs to the ATPase gamma chain family. F-type ATPases have 2 components, CF(1) - the catalytic core - and CF(0) - the membrane proton channel. CF(1) has five subunits: alpha(3), beta(3), gamma(1), delta(1), epsilon(1). CF(0) has three main subunits: a, b and c.

Its subcellular location is the cell membrane. Produces ATP from ADP in the presence of a proton gradient across the membrane. The gamma chain is believed to be important in regulating ATPase activity and the flow of protons through the CF(0) complex. This is ATP synthase gamma chain from Streptococcus equi subsp. equi (strain 4047).